Reading from the N-terminus, the 261-residue chain is Putative quercetin 2,3-dioxygenase Ta0133 (261 aa).

Residues His-17, His-19, His-61, and Glu-63 each contribute to the a divalent metal cation site.

This sequence belongs to the pirin family. Requires a divalent metal cation as cofactor.

It catalyses the reaction quercetin + O2 = 2-(3,4-dihydroxybenzoyloxy)-4,6-dihydroxybenzoate + CO. The protein operates within flavonoid metabolism; quercetin degradation. Its function is as follows. Putative quercetin 2,3-dioxygenase. This is Putative quercetin 2,3-dioxygenase Ta0133 from Thermoplasma acidophilum (strain ATCC 25905 / DSM 1728 / JCM 9062 / NBRC 15155 / AMRC-C165).